We begin with the raw amino-acid sequence, 397 residues long: Proteasome-activating nucleotidase (397 aa).

Positions 15-58 (DYVTFLKRRIRQLELQVRTLEADKERLERELSRLRMEMSRLRQP) form a coiled coil. ATP-binding positions include 182 to 187 (GCGKTL) and histidine 321. Residues 395 to 397 (MYG) are docks into pockets in the proteasome alpha-ring to cause gate opening.

The protein belongs to the AAA ATPase family. In terms of assembly, homohexamer. The hexameric complex has a two-ring architecture resembling a top hat that caps the 20S proteasome core at one or both ends. Upon ATP-binding, the C-terminus of PAN interacts with the alpha-rings of the proteasome core by binding to the intersubunit pockets.

It localises to the cytoplasm. In terms of biological role, ATPase which is responsible for recognizing, binding, unfolding and translocation of substrate proteins into the archaeal 20S proteasome core particle. Is essential for opening the gate of the 20S proteasome via an interaction with its C-terminus, thereby allowing substrate entry and access to the site of proteolysis. Thus, the C-termini of the proteasomal ATPase function like a 'key in a lock' to induce gate opening and therefore regulate proteolysis. Unfolding activity requires energy from ATP hydrolysis, whereas ATP binding alone promotes ATPase-20S proteasome association which triggers gate opening, and supports translocation of unfolded substrates. This Thermococcus kodakarensis (strain ATCC BAA-918 / JCM 12380 / KOD1) (Pyrococcus kodakaraensis (strain KOD1)) protein is Proteasome-activating nucleotidase.